Here is a 188-residue protein sequence, read N- to C-terminus: Holliday junction branch migration complex subunit RuvA (188 aa).

Residues Met-1 to Asp-63 form a domain I region. Positions Ser-64–Glu-142 are domain II. A region of interest (flexible linker) is located at residue Glu-142. The tract at residues Glu-142–Ile-188 is domain III.

Belongs to the RuvA family. As to quaternary structure, homotetramer. Forms an RuvA(8)-RuvB(12)-Holliday junction (HJ) complex. HJ DNA is sandwiched between 2 RuvA tetramers; dsDNA enters through RuvA and exits via RuvB. An RuvB hexamer assembles on each DNA strand where it exits the tetramer. Each RuvB hexamer is contacted by two RuvA subunits (via domain III) on 2 adjacent RuvB subunits; this complex drives branch migration. In the full resolvosome a probable DNA-RuvA(4)-RuvB(12)-RuvC(2) complex forms which resolves the HJ.

Its subcellular location is the cytoplasm. Its function is as follows. The RuvA-RuvB-RuvC complex processes Holliday junction (HJ) DNA during genetic recombination and DNA repair, while the RuvA-RuvB complex plays an important role in the rescue of blocked DNA replication forks via replication fork reversal (RFR). RuvA specifically binds to HJ cruciform DNA, conferring on it an open structure. The RuvB hexamer acts as an ATP-dependent pump, pulling dsDNA into and through the RuvAB complex. HJ branch migration allows RuvC to scan DNA until it finds its consensus sequence, where it cleaves and resolves the cruciform DNA. The polypeptide is Holliday junction branch migration complex subunit RuvA (Fervidobacterium nodosum (strain ATCC 35602 / DSM 5306 / Rt17-B1)).